The sequence spans 524 residues: Butyrophilin subfamily 1 member A1 (524 aa).

The first 26 residues, Met1–Ser26, serve as a signal peptide directing secretion. The Extracellular portion of the chain corresponds to Ala27 to Trp247. 2 Ig-like V-type domains span residues Pro29–Lys141 and Pro149–Ser235. 2 disulfides stabilise this stretch: Cys51–Cys125 and Cys165–Cys219. Asn56 and Asn216 each carry an N-linked (GlcNAc...) asparagine glycan. A helical transmembrane segment spans residues Ile248 to Phe268. The Cytoplasmic portion of the chain corresponds to Thr269–Pro524. The region spanning Ser286 to Pro480 is the B30.2/SPRY domain.

Belongs to the immunoglobulin superfamily. BTN/MOG family. Seems to associate with xanthine dehydrogenase/oxidase. Post-translationally, N-glycosylated. As to expression, strongly expressed in lactating mammary tissue (at protein level). About 100-fold lower levels in virgin mammary tissue. Also detected in spleen and thymus at 10-20 times lower levels compared to those detected in virgin mammary gland. Very low levels in several other tissues, including brain, heart, kidney, lymph node, lung and small intestine. In the thymus, detected in the stroma, in epithelial cells (at protein level). Most prominent in medullary areas of the thymus and at the corticomedullary junction (at protein level).

Its subcellular location is the membrane. In terms of biological role, may function in the secretion of milk-fat droplets. May act as a specific membrane-associated receptor for the association of cytoplasmic droplets with the apical plasma membrane. Inhibits the proliferation of CD4 and CD8 T-cells activated by anti-CD3 antibodies, T-cell metabolism and IL2 and IFNG secretion. This is Butyrophilin subfamily 1 member A1 (Btn1a1) from Mus musculus (Mouse).